Reading from the N-terminus, the 323-residue chain is Aldo-keto reductase family 1 member C3 (323 aa).

NADP(+) is bound by residues 20 to 24 (GFGTY) and Asp50. The active-site Proton donor is the Tyr55. His117 is a substrate binding site. NADP(+) is bound by residues 166 to 167 (SN), Gln190, 216 to 221 (YSALGS), and 270 to 280 (KSYNEQRIREN).

This sequence belongs to the aldo/keto reductase family.

It is found in the cytoplasm. It carries out the reaction a 3alpha-hydroxysteroid + NADP(+) = a 3-oxosteroid + NADPH + H(+). The enzyme catalyses a 3alpha-hydroxysteroid + NAD(+) = a 3-oxosteroid + NADH + H(+). It catalyses the reaction prostaglandin F2alpha + NADP(+) = prostaglandin D2 + NADPH + H(+). The catalysed reaction is testosterone + NAD(+) = androst-4-ene-3,17-dione + NADH + H(+). It carries out the reaction testosterone + NADP(+) = androst-4-ene-3,17-dione + NADPH + H(+). The enzyme catalyses prostaglandin F2alpha + NADP(+) = prostaglandin H2 + NADPH + H(+). It catalyses the reaction prostaglandin D2 + NADPH + H(+) = 11beta-prostaglandin F2 + NADP(+). The catalysed reaction is prostaglandin D2-ethanolamide + NADPH + H(+) = 11beta-prostaglandin F2-ethanolamide + NADP(+). It carries out the reaction 17beta-estradiol + NADP(+) = estrone + NADPH + H(+). The enzyme catalyses 17beta-estradiol + NAD(+) = estrone + NADH + H(+). It catalyses the reaction (20S)-hydroxypregn-4-en-3-one + NADP(+) = progesterone + NADPH + H(+). The catalysed reaction is (20S)-hydroxypregn-4-en-3-one + NAD(+) = progesterone + NADH + H(+). It carries out the reaction 5alpha-androstane-3alpha,17beta-diol + NADP(+) = 17beta-hydroxy-5alpha-androstan-3-one + NADPH + H(+). The enzyme catalyses 5alpha-androstane-3alpha,17beta-diol + NAD(+) = 17beta-hydroxy-5alpha-androstan-3-one + NADH + H(+). It catalyses the reaction androsterone + NADPH + H(+) = 5alpha-androstane-3alpha,17beta-diol + NADP(+). The catalysed reaction is 5alpha-androstane-3alpha,17beta-diol + NAD(+) = androsterone + NADH + H(+). It carries out the reaction 5alpha-androstane-3beta,17beta-diol + NADP(+) = 17beta-hydroxy-5alpha-androstan-3-one + NADPH + H(+). The enzyme catalyses 9-cis-retinol + NADP(+) = 9-cis-retinal + NADPH + H(+). Its pathway is steroid metabolism. Cytosolic aldo-keto reductase that catalyzes the NADH and NADPH-dependent reduction of ketosteroids to hydroxysteroids. Acts as a NAD(P)(H)-dependent 3-, 17- and 20-ketosteroid reductase on the steroid nucleus and side chain and regulates the metabolism of androgens, estrogens and progesterone. Displays the ability to catalyze both oxidation and reduction in vitro, but most probably acts as a reductase in vivo since the oxidase activity measured in vitro is inhibited by physiological concentration of NADPH. Acts preferentially as a 17-ketosteroid reductase and has the highest catalytic efficiency of the AKR1C enzyme for the reduction of delta4-androstenedione to form testosterone. Reduces prostaglandin (PG) D2 to 11beta-prostaglandin F2, progesterone to 20alpha-hydroxyprogesterone and estrone to 17beta-estradiol. Catalyzes the transformation of the potent androgen dihydrotestosterone (DHT) into the less active form, 5-alpha-androstan-3-alpha,17-beta-diol (3-alpha-diol). Also displays retinaldehyde reductase activity toward 9-cis-retinal. The protein is Aldo-keto reductase family 1 member C3 (AKR1C3) of Pongo abelii (Sumatran orangutan).